The following is a 173-amino-acid chain: Crossover junction endodeoxyribonuclease RuvC (173 aa).

Catalysis depends on residues aspartate 8, glutamate 67, and aspartate 139. Positions 8, 67, and 139 each coordinate Mg(2+).

Belongs to the RuvC family. As to quaternary structure, homodimer which binds Holliday junction (HJ) DNA. The HJ becomes 2-fold symmetrical on binding to RuvC with unstacked arms; it has a different conformation from HJ DNA in complex with RuvA. In the full resolvosome a probable DNA-RuvA(4)-RuvB(12)-RuvC(2) complex forms which resolves the HJ. The cofactor is Mg(2+).

Its subcellular location is the cytoplasm. It carries out the reaction Endonucleolytic cleavage at a junction such as a reciprocal single-stranded crossover between two homologous DNA duplexes (Holliday junction).. The RuvA-RuvB-RuvC complex processes Holliday junction (HJ) DNA during genetic recombination and DNA repair. Endonuclease that resolves HJ intermediates. Cleaves cruciform DNA by making single-stranded nicks across the HJ at symmetrical positions within the homologous arms, yielding a 5'-phosphate and a 3'-hydroxyl group; requires a central core of homology in the junction. The consensus cleavage sequence is 5'-(A/T)TT(C/G)-3'. Cleavage occurs on the 3'-side of the TT dinucleotide at the point of strand exchange. HJ branch migration catalyzed by RuvA-RuvB allows RuvC to scan DNA until it finds its consensus sequence, where it cleaves and resolves the cruciform DNA. The polypeptide is Crossover junction endodeoxyribonuclease RuvC (Salmonella paratyphi C (strain RKS4594)).